The chain runs to 394 residues: Methylthioribose kinase (394 aa).

Residues asparagine 44, lysine 61, and glutamate 115–leucine 117 contribute to the ATP site. Aspartate 233 lines the substrate pocket. Aspartate 250 to glutamate 252 contributes to the ATP binding site. Arginine 337 is a substrate binding site.

The protein belongs to the methylthioribose kinase family. In terms of assembly, homodimer.

It carries out the reaction 5-(methylsulfanyl)-D-ribose + ATP = 5-(methylsulfanyl)-alpha-D-ribose 1-phosphate + ADP + H(+). It functions in the pathway amino-acid biosynthesis; L-methionine biosynthesis via salvage pathway; S-methyl-5-thio-alpha-D-ribose 1-phosphate from S-methyl-5'-thioadenosine (hydrolase route): step 2/2. In terms of biological role, catalyzes the phosphorylation of methylthioribose into methylthioribose-1-phosphate. In Bacillus velezensis (strain DSM 23117 / BGSC 10A6 / LMG 26770 / FZB42) (Bacillus amyloliquefaciens subsp. plantarum), this protein is Methylthioribose kinase.